Consider the following 131-residue polypeptide: MTRSKIRENVFKMLFRVEFHDKSELAEQMELLNDELTNPTDEERQYIDEKCSAIIEHMAELDALIDEKSTGWKTNRMAKVDLAIIRLAVYEIKFEDDIPTKVSINEAVELAKKYGADESGAFVNGVLAKFA.

It belongs to the NusB family.

Involved in transcription antitermination. Required for transcription of ribosomal RNA (rRNA) genes. Binds specifically to the boxA antiterminator sequence of the ribosomal RNA (rrn) operons. The chain is Transcription antitermination protein NusB from Agathobacter rectalis (strain ATCC 33656 / DSM 3377 / JCM 17463 / KCTC 5835 / VPI 0990) (Eubacterium rectale).